Reading from the N-terminus, the 201-residue chain is Molybdenum cofactor guanylyltransferase (201 aa).

Residues 15 to 17, Lys-28, Asp-74, and Asp-104 each bind GTP; that span reads LAG. Asp-104 provides a ligand contact to Mg(2+).

The protein belongs to the MobA family. In terms of assembly, monomer. Mg(2+) is required as a cofactor.

Its subcellular location is the cytoplasm. It catalyses the reaction Mo-molybdopterin + GTP + H(+) = Mo-molybdopterin guanine dinucleotide + diphosphate. In terms of biological role, transfers a GMP moiety from GTP to Mo-molybdopterin (Mo-MPT) cofactor (Moco or molybdenum cofactor) to form Mo-molybdopterin guanine dinucleotide (Mo-MGD) cofactor. This Pseudomonas syringae pv. syringae (strain B728a) protein is Molybdenum cofactor guanylyltransferase.